A 65-amino-acid chain; its full sequence is Myosin-11 (65 aa).

Positions 1-65 (RSGKLDAFLV…NWQWWRLFTK (65 aa)) constitute a Myosin motor domain.

Belongs to the TRAFAC class myosin-kinesin ATPase superfamily. Myosin family. Muscle myosin is a hexameric protein that consists of 2 heavy chain subunits (MHC), 2 alkali light chain subunits (MLC) and 2 regulatory light chain subunits (MLC-2).

Its subcellular location is the melanosome. It is found in the cytoplasm. It localises to the myofibril. Functionally, muscle contraction. The protein is Myosin-11 (MYH11) of Sus scrofa (Pig).